A 215-amino-acid chain; its full sequence is Small ribosomal subunit protein uS3 (215 aa).

The KH type-2 domain occupies 38 to 106; it reads LRAFLKKKLF…EVLIDIQEIR (69 aa).

It belongs to the universal ribosomal protein uS3 family. In terms of assembly, part of the 30S ribosomal subunit. Forms a tight complex with proteins S10 and S14.

Functionally, binds the lower part of the 30S subunit head. Binds mRNA in the 70S ribosome, positioning it for translation. This is Small ribosomal subunit protein uS3 from Desulforapulum autotrophicum (strain ATCC 43914 / DSM 3382 / VKM B-1955 / HRM2) (Desulfobacterium autotrophicum).